The following is a 62-amino-acid chain: Large ribosomal subunit protein uL30 (62 aa).

Belongs to the universal ribosomal protein uL30 family. As to quaternary structure, part of the 50S ribosomal subunit.

The chain is Large ribosomal subunit protein uL30 from Ruegeria pomeroyi (strain ATCC 700808 / DSM 15171 / DSS-3) (Silicibacter pomeroyi).